Here is a 228-residue protein sequence, read N- to C-terminus: MKLTFLGHSAFLLENQEVSLVIDPFLTGNPMAPHDIPVKPNYILVSHGHGDHLGDAIRLAKETSATIVSVFELANYCARQGVLTHPMHIGGSHNFGPMKVKLTQALHGNSTGSDRGPAEYLGNPCGFLIYLGNKTIYHAGDTGLFGDMQLIGDLNSIDVALLPIGDNFTMGPTDALEAVKMLKPQRVIPMHYNTWPLISQDPTAFKKAVEQATTTQVDILQPGEFLKI.

It belongs to the UPF0173 family.

The chain is UPF0173 metal-dependent hydrolase Dred_1740 from Desulforamulus reducens (strain ATCC BAA-1160 / DSM 100696 / MI-1) (Desulfotomaculum reducens).